A 299-amino-acid polypeptide reads, in one-letter code: 4-diphosphocytidyl-2-C-methyl-D-erythritol kinase (299 aa).

The active site involves lysine 11. 94–104 (PQGGGLGGGSS) contacts ATP. The active site involves aspartate 136.

The protein belongs to the GHMP kinase family. IspE subfamily.

The catalysed reaction is 4-CDP-2-C-methyl-D-erythritol + ATP = 4-CDP-2-C-methyl-D-erythritol 2-phosphate + ADP + H(+). It functions in the pathway isoprenoid biosynthesis; isopentenyl diphosphate biosynthesis via DXP pathway; isopentenyl diphosphate from 1-deoxy-D-xylulose 5-phosphate: step 3/6. Catalyzes the phosphorylation of the position 2 hydroxy group of 4-diphosphocytidyl-2C-methyl-D-erythritol. The polypeptide is 4-diphosphocytidyl-2-C-methyl-D-erythritol kinase (Bordetella pertussis (strain Tohama I / ATCC BAA-589 / NCTC 13251)).